The following is a 599-amino-acid chain: Fumarate reductase flavoprotein subunit (599 aa).

FAD is bound by residues 12–16 (GAGGG), 36–38 (VSK), 44–52 (THTVAAEGG), 156–158 (HFV), and D212. H45 carries the post-translational modification Tele-8alpha-FAD histidine. Residues H233 and R249 contribute to the active site. FAD contacts are provided by residues 357–358 (HY), E381, and 392–398 (RLGSNSL).

The protein belongs to the FAD-dependent oxidoreductase 2 family. FRD/SDH subfamily. Part of an enzyme complex containing four subunits: a flavoprotein (FrdA), an iron-sulfur protein (FrdB), and two hydrophobic anchor proteins (FrdC and FrdD). The cofactor is FAD.

Its subcellular location is the cell inner membrane. The enzyme catalyses a quinone + succinate = fumarate + a quinol. The catalysed reaction is a menaquinone + succinate = a menaquinol + fumarate. This chain is Fumarate reductase flavoprotein subunit (frdA), found in Haemophilus influenzae (strain ATCC 51907 / DSM 11121 / KW20 / Rd).